Consider the following 811-residue polypeptide: Exocyst complex component 6B (811 aa).

Residues 50-119 (MEKLETRIRN…LVIAMEELKQ (70 aa)) are a coiled coil. The segment at 260 to 280 (STSPKSEQDSGILDVEDEEDD) is disordered.

This sequence belongs to the SEC15 family. The exocyst complex is composed of SEC3, SEC5, SEC6, SEC8, SEC10, SEC15, EXO70 and EXO84.

In terms of biological role, component of the exocyst complex involved in the docking of exocytic vesicles with fusion sites on the plasma membrane. The protein is Exocyst complex component 6B (EXOC6B) of Homo sapiens (Human).